A 718-amino-acid chain; its full sequence is Ribonuclease J (718 aa).

The interval 1-130 is disordered; the sequence is MNDSRNRGRK…RGNRGGGRRN (130 aa). 2 stretches are compositionally biased toward low complexity: residues 55–91 and 100–118; these read AAQGAQGSQDSQGSQNAQGSQNRESGNNNRNRSNNNR and SGNANEGANNNSGNQNRQG. Residues histidine 220, histidine 222, aspartate 224, histidine 225, histidine 287, and aspartate 309 each coordinate Zn(2+). Substrate is bound at residue 510-514; the sequence is HTSGH. Histidine 536 serves as a coordination point for Zn(2+).

This sequence belongs to the metallo-beta-lactamase superfamily. RNA-metabolizing metallo-beta-lactamase-like family. Bacterial RNase J subfamily. Homodimer, may be a subunit of the RNA degradosome. It depends on Zn(2+) as a cofactor.

It is found in the cytoplasm. Its function is as follows. An RNase that has 5'-3' exonuclease and possibly endoonuclease activity. Involved in maturation of rRNA and in some organisms also mRNA maturation and/or decay. This Corynebacterium glutamicum (strain ATCC 13032 / DSM 20300 / JCM 1318 / BCRC 11384 / CCUG 27702 / LMG 3730 / NBRC 12168 / NCIMB 10025 / NRRL B-2784 / 534) protein is Ribonuclease J.